We begin with the raw amino-acid sequence, 259 residues long: Undecaprenyl-diphosphatase 4 (259 aa).

8 consecutive transmembrane segments (helical) span residues 1–21 (MNWL…FLPI), 39–59 (AGLF…FIYY), 71–91 (FSKL…IGLL), 99–119 (ISKT…FLYM), 133–153 (ITYK…FPAI), 173–193 (AAYF…ILQF), 208–228 (SLIV…SWMI), and 239–259 (FAYY…THVF).

It belongs to the UppP family.

It localises to the cell membrane. It carries out the reaction di-trans,octa-cis-undecaprenyl diphosphate + H2O = di-trans,octa-cis-undecaprenyl phosphate + phosphate + H(+). Catalyzes the dephosphorylation of undecaprenyl diphosphate (UPP). Confers resistance to bacitracin. The sequence is that of Undecaprenyl-diphosphatase 4 from Bacillus thuringiensis (strain Al Hakam).